The following is a 377-amino-acid chain: Nitric oxide reductase FlRd-NAD(+) reductase (377 aa).

Belongs to the FAD-dependent oxidoreductase family. It depends on FAD as a cofactor.

It is found in the cytoplasm. The catalysed reaction is 2 reduced [nitric oxide reductase rubredoxin domain] + NAD(+) + H(+) = 2 oxidized [nitric oxide reductase rubredoxin domain] + NADH. It participates in nitrogen metabolism; nitric oxide reduction. Functionally, one of at least two accessory proteins for anaerobic nitric oxide (NO) reductase. Reduces the rubredoxin moiety of NO reductase. The polypeptide is Nitric oxide reductase FlRd-NAD(+) reductase (Klebsiella pneumoniae (strain 342)).